We begin with the raw amino-acid sequence, 263 residues long: MRVAVSGFKGRMGHEVVKTVLREADLELVAVLDHEPKEKNINEMVEFSSLDVPVFGNLSEMLEEIKPDCVVDFTTPKVGYSNTKTILEHGVRAVVGTTGFTPEQISELRTIAESKKIGALIAPNFAVGAVLMMQFAQKAAKYFPNVEIIELHHDNKLDAPSGTGVKTAEMMAETREFVKQGAADEVELIEGARGAEYEGMRIHSVRLPGLVAHQEVIFGAEGQGLTIRHDSYDRISFMSGVALSVRKTKELETLIYGLENILD.

NAD(+) contacts are provided by residues 7 to 12, 96 to 98, and 122 to 125; these read GFKGRM, GTT, and APNF. His152 serves as the catalytic Proton donor/acceptor. Residue His153 coordinates (S)-2,3,4,5-tetrahydrodipicolinate. The active-site Proton donor is Lys156. 162–163 contacts (S)-2,3,4,5-tetrahydrodipicolinate; that stretch reads GT.

This sequence belongs to the DapB family.

It localises to the cytoplasm. The catalysed reaction is (S)-2,3,4,5-tetrahydrodipicolinate + NAD(+) + H2O = (2S,4S)-4-hydroxy-2,3,4,5-tetrahydrodipicolinate + NADH + H(+). It carries out the reaction (S)-2,3,4,5-tetrahydrodipicolinate + NADP(+) + H2O = (2S,4S)-4-hydroxy-2,3,4,5-tetrahydrodipicolinate + NADPH + H(+). The protein operates within amino-acid biosynthesis; L-lysine biosynthesis via DAP pathway; (S)-tetrahydrodipicolinate from L-aspartate: step 4/4. Its function is as follows. Catalyzes the conversion of 4-hydroxy-tetrahydrodipicolinate (HTPA) to tetrahydrodipicolinate. This Listeria monocytogenes serovar 1/2a (strain ATCC BAA-679 / EGD-e) protein is 4-hydroxy-tetrahydrodipicolinate reductase.